Here is a 575-residue protein sequence, read N- to C-terminus: MSNQERQERPEKDPDLRSTEVTEGYEKAPHRAMFRAMGYDDEDLSSPMIGVANPAADITPCNVHLDDVADAAYDGIDDTEGMPIEFGTITISDAISMGTEGMKASLISREIIADSVELVTFGERMDGIVTIGGCDKNMPGMMMAAIRTDLPSVFLYGGSIMPGEHDGREVTIQNVFEGVGAVADGEMSEGELDEMERHACPGAGSCGGMFTANTMASISEALGFAPLGSASPPAEHESRYEEARRAGELAVEVVQERRSPSDFLTRESFENAIALQVAVGGSTNAVLHLLALAAEAGIDLDIETFNEISARTPKIADLQPGGERVMNDLHEVGGVPVVLRALNDAGLLHGDALTVTGNTIAEELEQIDPPTVEDLDVDYLNTVEDPIHERGAIRILSGNLAPDGAVIKITGEDHLHHEGPVRVFEQEEGAMEYVQEGHVESGDVICIRNEGPQGGPGMREMLGVTSAVAGQGHAEDVALFTDGRFSGATRGFSIGHVAPEAFVGGPIAALEDGDTITIDIDDHELSVDLTEDEMQQRLEGHDPEPTYDSGVLAKYHNDFGSAANGAVTNPGAKWD.

Residues 1–27 (MSNQERQERPEKDPDLRSTEVTEGYEK) form a disordered region. A [2Fe-2S] cluster-binding site is contributed by Cys61. Asp93 is a binding site for Mg(2+). Cys134 is a binding site for [2Fe-2S] cluster. The Mg(2+) site is built by Asp135 and Lys136. Residue Lys136 is modified to N6-carboxylysine. Cys206 serves as a coordination point for [2Fe-2S] cluster. Glu460 serves as a coordination point for Mg(2+). Ser486 serves as the catalytic Proton acceptor.

Belongs to the IlvD/Edd family. As to quaternary structure, homodimer. [2Fe-2S] cluster is required as a cofactor. It depends on Mg(2+) as a cofactor.

The enzyme catalyses (2R)-2,3-dihydroxy-3-methylbutanoate = 3-methyl-2-oxobutanoate + H2O. It carries out the reaction (2R,3R)-2,3-dihydroxy-3-methylpentanoate = (S)-3-methyl-2-oxopentanoate + H2O. Its pathway is amino-acid biosynthesis; L-isoleucine biosynthesis; L-isoleucine from 2-oxobutanoate: step 3/4. It functions in the pathway amino-acid biosynthesis; L-valine biosynthesis; L-valine from pyruvate: step 3/4. Functions in the biosynthesis of branched-chain amino acids. Catalyzes the dehydration of (2R,3R)-2,3-dihydroxy-3-methylpentanoate (2,3-dihydroxy-3-methylvalerate) into 2-oxo-3-methylpentanoate (2-oxo-3-methylvalerate) and of (2R)-2,3-dihydroxy-3-methylbutanoate (2,3-dihydroxyisovalerate) into 2-oxo-3-methylbutanoate (2-oxoisovalerate), the penultimate precursor to L-isoleucine and L-valine, respectively. This chain is Dihydroxy-acid dehydratase, found in Haloarcula marismortui (strain ATCC 43049 / DSM 3752 / JCM 8966 / VKM B-1809) (Halobacterium marismortui).